The chain runs to 234 residues: Large ribosomal subunit protein uL1 (234 aa).

The protein belongs to the universal ribosomal protein uL1 family. Part of the 50S ribosomal subunit.

In terms of biological role, binds directly to 23S rRNA. The L1 stalk is quite mobile in the ribosome, and is involved in E site tRNA release. Its function is as follows. Protein L1 is also a translational repressor protein, it controls the translation of the L11 operon by binding to its mRNA. The sequence is that of Large ribosomal subunit protein uL1 from Geobacter metallireducens (strain ATCC 53774 / DSM 7210 / GS-15).